A 354-amino-acid chain; its full sequence is Ferrochelatase (354 aa).

His-214 and Glu-295 together coordinate Fe cation.

The protein belongs to the ferrochelatase family.

It is found in the cytoplasm. The catalysed reaction is heme b + 2 H(+) = protoporphyrin IX + Fe(2+). It participates in porphyrin-containing compound metabolism; protoheme biosynthesis; protoheme from protoporphyrin-IX: step 1/1. Catalyzes the ferrous insertion into protoporphyrin IX. In Burkholderia orbicola (strain AU 1054), this protein is Ferrochelatase.